A 120-amino-acid chain; its full sequence is MDNIKFTPQDILHKQFKERNIGKGYDEADVDAFLDDVIKDYDTYNKELERLNDENERLRAKVDELNRQVEVGSSMSNQTASRQPVSSATNMDILKRLSNLERRVFGSQLDGNDNNDSHLL.

Residues 34–74 (LDDVIKDYDTYNKELERLNDENERLRAKVDELNRQVEVGSS) adopt a coiled-coil conformation. The interval 69-90 (VEVGSSMSNQTASRQPVSSATN) is disordered. The segment covering 71–90 (VGSSMSNQTASRQPVSSATN) has biased composition (polar residues).

It belongs to the GpsB family. Forms polymers through the coiled coil domains. Interacts with PBP1, MreC and EzrA.

It is found in the cytoplasm. Its function is as follows. Divisome component that associates with the complex late in its assembly, after the Z-ring is formed, and is dependent on DivIC and PBP2B for its recruitment to the divisome. Together with EzrA, is a key component of the system that regulates PBP1 localization during cell cycle progression. Its main role could be the removal of PBP1 from the cell pole after pole maturation is completed. Also contributes to the recruitment of PBP1 to the division complex. Not essential for septum formation. The sequence is that of Cell cycle protein GpsB from Limosilactobacillus reuteri (strain DSM 20016) (Lactobacillus reuteri).